The chain runs to 311 residues: Formimidoylglutamase (311 aa).

Residues H122, D151, H153, D155, C242, and D244 each contribute to the Mn(2+) site.

The protein belongs to the arginase family. It depends on Mn(2+) as a cofactor.

The catalysed reaction is N-formimidoyl-L-glutamate + H2O = formamide + L-glutamate. It functions in the pathway amino-acid degradation; L-histidine degradation into L-glutamate; L-glutamate from N-formimidoyl-L-glutamate (hydrolase route): step 1/1. Its function is as follows. Catalyzes the conversion of N-formimidoyl-L-glutamate to L-glutamate and formamide. The chain is Formimidoylglutamase from Pseudomonas paraeruginosa (strain DSM 24068 / PA7) (Pseudomonas aeruginosa (strain PA7)).